The sequence spans 509 residues: Maturase K (509 aa).

This sequence belongs to the intron maturase 2 family. MatK subfamily.

Its subcellular location is the plastid. It is found in the chloroplast. Usually encoded in the trnK tRNA gene intron. Probably assists in splicing its own and other chloroplast group II introns. The protein is Maturase K of Stylosanthes hamata (Caribbean stylo).